The following is a 382-amino-acid chain: Lipid-A-disaccharide synthase (382 aa).

Belongs to the LpxB family.

The catalysed reaction is 2-N,3-O-bis[(3R)-3-hydroxytetradecanoyl]-alpha-D-glucosaminyl 1-phosphate + UDP-2-N,3-O-bis[(3R)-3-hydroxytetradecanoyl]-alpha-D-glucosamine = lipid A disaccharide (E. coli) + UDP + H(+). It carries out the reaction a lipid X + a UDP-2-N,3-O-bis[(3R)-3-hydroxyacyl]-alpha-D-glucosamine = a lipid A disaccharide + UDP + H(+). The protein operates within glycolipid biosynthesis; lipid IV(A) biosynthesis; lipid IV(A) from (3R)-3-hydroxytetradecanoyl-[acyl-carrier-protein] and UDP-N-acetyl-alpha-D-glucosamine: step 5/6. Functionally, condensation of UDP-2,3-diacylglucosamine and 2,3-diacylglucosamine-1-phosphate to form lipid A disaccharide, a precursor of lipid A, a phosphorylated glycolipid that anchors the lipopolysaccharide to the outer membrane of the cell. This chain is Lipid-A-disaccharide synthase, found in Shigella flexneri serotype 5b (strain 8401).